The sequence spans 453 residues: Serine incorporator 1 (453 aa).

A lipid anchor (N-myristoyl glycine) is attached at glycine 2. Residues 2 to 39 (GSVLGLCSMASWIPCLCGSAPCLLCRCCPSGNNSTVTR) lie on the Cytoplasmic side of the membrane. Residues 40–60 (LIYALFLLVGVCVACVMLIPG) form a helical membrane-spanning segment. Topologically, residues 61 to 88 (MEEQLNKIPGFCENEKGVVPCNILVGYK) are lumenal. Residues 89 to 109 (AVYRLCFGLAMFYLLLSLLMI) form a helical membrane-spanning segment. The Cytoplasmic portion of the chain corresponds to 110–123 (KVKSSSDPRAAVHN). The helical transmembrane segment at 124–144 (GFWFFKFAAAIAIIIGAFFIP) threads the bilayer. Residues 145–151 (EGTFTTV) are Lumenal-facing. The chain crosses the membrane as a helical span at residues 152–172 (WFYVGMAGAFCFILIQLVLLI). Over 173–197 (DFAHSWNESWVEKMEEGNSRCWYAA) the chain is Cytoplasmic. Residues 198–218 (LLSATALNYLLSLVAIVLFFV) form a helical membrane-spanning segment. Topologically, residues 219 to 231 (YYTHPASCSENKA) are lumenal. Residues 232–252 (FISVNMLLCIGASVMSILPKI) form a helical membrane-spanning segment. Residues 253–259 (QESQPRS) lie on the Cytoplasmic side of the membrane. The helical transmembrane segment at 260-280 (GLLQSSVITVYTMYLTWSAMT) threads the bilayer. The Lumenal portion of the chain corresponds to 281–309 (NEPETNCNPSLLSIIGYNTTSTVPKEGQS). The chain crosses the membrane as a helical span at residues 310–330 (VQWWHAQGIIGLILFLLCVFY). The Cytoplasmic portion of the chain corresponds to 331–387 (SSIRTSNNSQVNKLTLTSDESTLIEDGGARSDGSLEDGDDVHRAVDNERDGVTYSYS). Serine 351 bears the Phosphoserine mark. At threonine 352 the chain carries Phosphothreonine. A phosphoserine mark is found at serine 361 and serine 364. Residues 388–408 (FFHFMLFLASLYIMMTLTNWY) form a helical membrane-spanning segment. Residues 409–426 (RYEPSREMKSQWTAVWVK) are Lumenal-facing. The chain crosses the membrane as a helical span at residues 427-447 (ISSSWIGIVLYVWTLVAPLVL). Residues 448-453 (TNRDFD) are Cytoplasmic-facing.

This sequence belongs to the TDE1 family. As to quaternary structure, interacts with SPTLC1.

Its subcellular location is the endoplasmic reticulum membrane. Functionally, enhances the incorporation of serine into phosphatidylserine and sphingolipids. This is Serine incorporator 1 (SERINC1) from Pongo abelii (Sumatran orangutan).